Reading from the N-terminus, the 390-residue chain is Endoglucanase gh5-1 (390 aa).

The signal sequence occupies residues 1–16; the sequence is MKATILASTFAAGALA. Residues 17–52 enclose the CBM1 domain; that stretch reads QSGAWGQCGGNGWSGATSCISGYACNYVNDWYSQCQ. Asparagine 157 and asparagine 261 each carry an N-linked (GlcNAc...) asparagine glycan.

It belongs to the glycosyl hydrolase 5 (cellulase A) family. Post-translationally, N-glycosylated.

It is found in the secreted. The catalysed reaction is Endohydrolysis of (1-&gt;4)-beta-D-glucosidic linkages in cellulose, lichenin and cereal beta-D-glucans.. Functionally, endoglucanase that plays an important role in biomass degradation. Binds onto plant cell walls to participate in the hydrolysis of cellulose. The protein is Endoglucanase gh5-1 of Neurospora crassa (strain ATCC 24698 / 74-OR23-1A / CBS 708.71 / DSM 1257 / FGSC 987).